We begin with the raw amino-acid sequence, 89 residues long: Small ribosomal subunit protein uS15 (89 aa).

It belongs to the universal ribosomal protein uS15 family. Part of the 30S ribosomal subunit. Forms a bridge to the 50S subunit in the 70S ribosome, contacting the 23S rRNA.

Its function is as follows. One of the primary rRNA binding proteins, it binds directly to 16S rRNA where it helps nucleate assembly of the platform of the 30S subunit by binding and bridging several RNA helices of the 16S rRNA. Functionally, forms an intersubunit bridge (bridge B4) with the 23S rRNA of the 50S subunit in the ribosome. The chain is Small ribosomal subunit protein uS15 from Anoxybacillus flavithermus (strain DSM 21510 / WK1).